We begin with the raw amino-acid sequence, 293 residues long: Protein nud-2 (293 aa).

Positions 36 to 147 (EIEKMMDSEL…EKIAMLESEL (112 aa)) form a coiled coil. The interval 239–293 (KSQRVSTGTGAGACINRIVKDLMTKVERLDSILSTIRVSNNSSNNNSSHLTTTRA) is required for interaction with unc-83 isoform c.

It belongs to the nudE family. In terms of assembly, component of a dynein-regulating complex composed of at least lis-1 and nud-2. Interacts with lis-1; the interaction is direct. Interacts (via C-terminus) with unc-83; the interaction is direct, and is required for recruitment of nud-2 to the nuclear envelope. Expressed in ventral cord neurons, the pharynx, seam cells of the hypodermis and in vulval muscle cells.

The protein resides in the nucleus envelope. Functionally, part of a complex with lis-1, which is recruited to the nuclear envelope by unc-83, where, in turn, it recruits dynein to the nuclear surface and regulates nuclear migration in hypodermal precursor cells. Plays a role in GABAergic synaptic vesicle localization in the ventral nerve cord. The sequence is that of Protein nud-2 from Caenorhabditis elegans.